The sequence spans 108 residues: Putative disulfide oxidoreductase YuzD (108 aa).

Cysteine 16 and cysteine 19 are joined by a disulfide.

The chain is Putative disulfide oxidoreductase YuzD (yuzD) from Bacillus subtilis (strain 168).